Reading from the N-terminus, the 397-residue chain is Teichoic acid D-alanine hydrolase (397 aa).

Positions 1–27 (MKFNKEKLVIHACVLLFIIISIGLVFH) are cleaved as a signal peptide.

Its subcellular location is the cell membrane. The enzyme catalyses [(4-D-Ala)-(2-GlcNAc)-Rib-ol-P]n-[Gro-P]m-beta-D-ManNAc-(1-&gt;4)-alpha-D-GlcNAc-P-peptidoglycan + n H2O = [(2-GlcNAc)-Rib-ol-P]n-[Gro-P]m-beta-D-ManNAc-(1-&gt;4)-alpha-D-GlcNAc-P-peptidoglycan + n D-alanine.. Functionally, catalyzes the liberation of D-alanyl moieties present on wall teichoic acid (WTA) and lipoteichoic acid (LTA). Affects the methicillin resistance level and autolysis in the presence of Triton X-100 as well as the cell wall structure. This Staphylococcus aureus (strain MRSA252) protein is Teichoic acid D-alanine hydrolase (fmtA).